We begin with the raw amino-acid sequence, 299 residues long: Phosphate import ATP-binding protein PstB 1 (299 aa).

Positions 1–51 (MTENEMTSNDSTEPTPTTETAASSPDPSGDPLIEQSIDVEGTDSTAAETGK) are disordered. Residues 10 to 27 (DSTEPTPTTETAASSPDP) are compositionally biased toward low complexity. The ABC transporter domain occupies 54–294 (IESSDLNVFY…PESQRVEDYI (241 aa)). An ATP-binding site is contributed by 86–93 (GPSGCGKS).

Belongs to the ABC transporter superfamily. Phosphate importer (TC 3.A.1.7) family. In terms of assembly, the complex is composed of two ATP-binding proteins (PstB), two transmembrane proteins (PstC and PstA) and a solute-binding protein (PstS).

It localises to the cell membrane. The catalysed reaction is phosphate(out) + ATP + H2O = ADP + 2 phosphate(in) + H(+). In terms of biological role, part of the ABC transporter complex PstSACB involved in phosphate import. Responsible for energy coupling to the transport system. This chain is Phosphate import ATP-binding protein PstB 1, found in Haloarcula marismortui (strain ATCC 43049 / DSM 3752 / JCM 8966 / VKM B-1809) (Halobacterium marismortui).